A 397-amino-acid polypeptide reads, in one-letter code: uncharacterized protein (397 aa).

Transmembrane regions (helical) follow at residues 9 to 29, 38 to 58, 85 to 105, 112 to 132, 148 to 168, 182 to 202, 226 to 246, 271 to 291, 310 to 330, 331 to 351, and 365 to 385; these read NAVL…GFLT, LLAS…GAQL, FLAA…VGGA, IFGI…ILIF, MGFI…PPVV, PIAI…FAGA, AILI…GVVS, VLFG…AAYT, WIIA…KPAA, VLVF…ALIL, and HPVF…ILSG.

It belongs to the NRAMP family.

It localises to the cell membrane. This is an uncharacterized protein from Haemophilus influenzae (strain ATCC 51907 / DSM 11121 / KW20 / Rd).